Reading from the N-terminus, the 111-residue chain is Secreted transmembrane peptide 5 (111 aa).

Positions 1–46 are cleaved as a signal peptide; it reads MRLSVFYIFITRLAMTKNATKNEMGSKSPNIVALVLPLLLILYTLS. The SCOOP motif motif lies at 66–79; that stretch reads IVWTPHSNSCGGSP. Positions 72–74 match the SxS motif essential for MIK2 binding motif; that stretch reads SNS. The disordered stretch occupies residues 89 to 111; sequence TTGRPCRRSRPPGTNIPVSDQSP.

The protein belongs to the serine rich endogenous peptide (SCOOP) phytocytokine family. Interacts with MIK2 (via extracellular leucine-rich repeat domain); this interaction triggers the formation of complex between MIK2 and the BAK1/SERK3 and SERK4 coreceptors, and subsequent BAK1 activation by phosphorylation. In terms of tissue distribution, mostly expressed in leaves, and, to a lower extent, in roots, stems, siliques, seeds and flowers.

It localises to the cell membrane. It is found in the secreted. Its subcellular location is the extracellular space. The protein localises to the apoplast. Its function is as follows. Brassicaceae-specific phytocytokine (plant endogenous peptide released into the apoplast) perceived by MIK2 in a BAK1/SERK3 and SERK4 coreceptors-dependent manner, that modulates various physiological and antimicrobial processes including growth prevention and reactive oxygen species (ROS) response regulation. In Arabidopsis thaliana (Mouse-ear cress), this protein is Secreted transmembrane peptide 5.